Consider the following 208-residue polypeptide: MATTENAESGSPENKVDRADPDAKYPLKVLYCGVCSLPAEYCEYMPEPAKCKQWLEKNFPDVFAKLTLGTAPKQESKGGGGGEDGGGGRGRGEAPPAGEEEEKKKQKRGGRGQIKQKKKTVPQKVTIAKIPRAKKKYVTRVCGLATFDIELKEAQRFFAQKFSCGASVTAEDEIIIQGDFTDDIIDVIQEKWPEVDDDSIDDLGEVKK.

Residues 1–12 are compositionally biased toward polar residues; that stretch reads MATTENAESGSP. Disordered stretches follow at residues 1–20 and 69–120; these read MATTENAESGSPENKVDRAD and GTAP…KKKT. The residue at position 9 (serine 9) is a Phosphoserine. The segment covering 77–89 has biased composition (gly residues); it reads KGGGGGEDGGGGR. The span at 105–120 shows a compositional bias: basic residues; sequence KQKRGGRGQIKQKKKT. In terms of domain architecture, SUI1 spans 125–192; that stretch reads VTIAKIPRAK…DIIDVIQEKW (68 aa).

This sequence belongs to the DENR family.

Its function is as follows. May be involved in the translation of target mRNAs by scanning and recognition of the initiation codon. Involved in translation initiation; promotes recruitment of aminoacetyled initiator tRNA to P site of 40S ribosomes. Can promote release of deacylated tRNA and mRNA from recycled 40S subunits following ABCE1-mediated dissociation of post-termination ribosomal complexes into subunits. The chain is Density-regulated protein (denr) from Danio rerio (Zebrafish).